Consider the following 348-residue polypeptide: Holliday junction branch migration complex subunit RuvB (348 aa).

A large ATPase domain (RuvB-L) region spans residues 4 to 184 (ADRLIAASGR…FGIVQRLEFY (181 aa)). ATP is bound by residues isoleucine 23, arginine 24, glycine 65, lysine 68, threonine 69, threonine 70, 131 to 133 (EDF), arginine 174, tyrosine 184, and arginine 221. Threonine 69 lines the Mg(2+) pocket. The segment at 185 to 255 (NDKDLSTIVS…VADMALNLLD (71 aa)) is small ATPAse domain (RuvB-S). Positions 258-348 (ERGFDHSDRR…GGDFSEPGDE (91 aa)) are head domain (RuvB-H). DNA is bound by residues arginine 294, arginine 313, and arginine 318.

This sequence belongs to the RuvB family. Homohexamer. Forms an RuvA(8)-RuvB(12)-Holliday junction (HJ) complex. HJ DNA is sandwiched between 2 RuvA tetramers; dsDNA enters through RuvA and exits via RuvB. An RuvB hexamer assembles on each DNA strand where it exits the tetramer. Each RuvB hexamer is contacted by two RuvA subunits (via domain III) on 2 adjacent RuvB subunits; this complex drives branch migration. In the full resolvosome a probable DNA-RuvA(4)-RuvB(12)-RuvC(2) complex forms which resolves the HJ.

It localises to the cytoplasm. It catalyses the reaction ATP + H2O = ADP + phosphate + H(+). The RuvA-RuvB-RuvC complex processes Holliday junction (HJ) DNA during genetic recombination and DNA repair, while the RuvA-RuvB complex plays an important role in the rescue of blocked DNA replication forks via replication fork reversal (RFR). RuvA specifically binds to HJ cruciform DNA, conferring on it an open structure. The RuvB hexamer acts as an ATP-dependent pump, pulling dsDNA into and through the RuvAB complex. RuvB forms 2 homohexamers on either side of HJ DNA bound by 1 or 2 RuvA tetramers; 4 subunits per hexamer contact DNA at a time. Coordinated motions by a converter formed by DNA-disengaged RuvB subunits stimulates ATP hydrolysis and nucleotide exchange. Immobilization of the converter enables RuvB to convert the ATP-contained energy into a lever motion, pulling 2 nucleotides of DNA out of the RuvA tetramer per ATP hydrolyzed, thus driving DNA branch migration. The RuvB motors rotate together with the DNA substrate, which together with the progressing nucleotide cycle form the mechanistic basis for DNA recombination by continuous HJ branch migration. Branch migration allows RuvC to scan DNA until it finds its consensus sequence, where it cleaves and resolves cruciform DNA. This Pseudomonas putida (strain ATCC 47054 / DSM 6125 / CFBP 8728 / NCIMB 11950 / KT2440) protein is Holliday junction branch migration complex subunit RuvB.